The sequence spans 827 residues: Glycerol-3-phosphate acyltransferase 1, mitochondrial (827 aa).

At methionine 1–glycine 87 the chain is on the cytoplasmic side. Positions asparagine 80–valine 120 are important for mitochondrial localization. An intramembrane segment occupies leucine 88–arginine 118. The Cytoplasmic segment spans residues aspartate 119–leucine 827. An HXXXXD motif motif is present at residues histidine 230–aspartate 235. The CoA site is built by arginine 278, arginine 279, lysine 288, arginine 293, and arginine 328. Serine 380 carries the post-translational modification Phosphoserine. Arginine 462 contacts CoA. Residues serine 687 and serine 694 each carry the phosphoserine modification. An N6-acetyllysine mark is found at lysine 779 and lysine 783.

It belongs to the GPAT/DAPAT family. Highest levels in liver, intermediate levels in muscle and kidney, and lowest levels in lung and brain.

The protein localises to the mitochondrion outer membrane. The catalysed reaction is sn-glycerol 3-phosphate + an acyl-CoA = a 1-acyl-sn-glycero-3-phosphate + CoA. It catalyses the reaction (9Z,12Z)-octadecadienoyl-CoA + sn-glycerol 3-phosphate = 1-(9Z,12Z)-octadecadienoyl-sn-glycero-3-phosphate + CoA. The enzyme catalyses sn-glycerol 3-phosphate + (9Z)-octadecenoyl-CoA = 1-(9Z-octadecenoyl)-sn-glycero-3-phosphate + CoA. It carries out the reaction sn-glycerol 3-phosphate + octadecanoyl-CoA = 1-octadecanoyl-sn-glycero-3-phosphate + CoA. The catalysed reaction is sn-glycerol 3-phosphate + hexadecanoyl-CoA = 1-hexadecanoyl-sn-glycero-3-phosphate + CoA. It catalyses the reaction dodecanoyl-CoA + sn-glycerol 3-phosphate = 1-dodecanoyl-sn-glycerol 3-phosphate + CoA. The enzyme catalyses 1-acyl-sn-glycero-3-phospho-(1'-sn-glycerol) + an acyl-CoA = a 1,2-diacyl-sn-glycero-3-phospho-(1'-sn-glycerol) + CoA. The protein operates within phospholipid metabolism; CDP-diacylglycerol biosynthesis; CDP-diacylglycerol from sn-glycerol 3-phosphate: step 1/3. Mitochondrial membrane protein that catalyzes the essential first step of biosynthesis of glycerolipids such as triglycerides, phosphatidic acids and lysophosphatidic acids. Esterifies acyl-group from acyl-coenzyme A (acyl-CoA) to the sn-1 position of glycerol-3-phosphate, to produce lysophosphatidic acid. Has a narrow hydrophobic binding cleft that selects for a linear acyl chain. Catalytic activity is higher for substrates with a 16-carbon acyl chain. In Mus musculus (Mouse), this protein is Glycerol-3-phosphate acyltransferase 1, mitochondrial.